Consider the following 177-residue polypeptide: ATP-dependent protease subunit HslV (177 aa).

The active site involves threonine 7. 3 residues coordinate Na(+): alanine 162, cysteine 165, and threonine 168.

It belongs to the peptidase T1B family. HslV subfamily. In terms of assembly, a double ring-shaped homohexamer of HslV is capped on each side by a ring-shaped HslU homohexamer. The assembly of the HslU/HslV complex is dependent on binding of ATP.

The protein resides in the cytoplasm. It catalyses the reaction ATP-dependent cleavage of peptide bonds with broad specificity.. Its activity is regulated as follows. Allosterically activated by HslU binding. Its function is as follows. Protease subunit of a proteasome-like degradation complex believed to be a general protein degrading machinery. The polypeptide is ATP-dependent protease subunit HslV (Thioalkalivibrio sulfidiphilus (strain HL-EbGR7)).